A 258-amino-acid polypeptide reads, in one-letter code: Lyso-ornithine lipid O-acyltransferase (258 aa).

A helical membrane pass occupies residues 7 to 29 (LLRSARLLGLVALGLGLAAWVSL).

It belongs to the 1-acyl-sn-glycerol-3-phosphate acyltransferase family. OlsA subfamily.

The protein resides in the membrane. The catalysed reaction is a lyso-ornithine lipid + a fatty acyl-[ACP] = an N(2)-[(3R)-3-(acyloxy)acyl]-L-ornithine lipid + holo-[ACP]. The protein operates within lipid metabolism. Catalyzes the second step in the formation of ornithine lipids, which are phosphorus-free membrane lipids. Uses acyl-acyl carrier protein (acyl-AcpP) as an acyl donor and converts lyso-ornithine lipid (LOL) into ornithine lipid (OL). The polypeptide is Lyso-ornithine lipid O-acyltransferase (Pseudomonas aeruginosa (strain ATCC 15692 / DSM 22644 / CIP 104116 / JCM 14847 / LMG 12228 / 1C / PRS 101 / PAO1)).